The following is a 235-amino-acid chain: Probable transcriptional regulatory protein CJJ81176_1187 (235 aa).

Belongs to the TACO1 family.

The protein resides in the cytoplasm. The sequence is that of Probable transcriptional regulatory protein CJJ81176_1187 from Campylobacter jejuni subsp. jejuni serotype O:23/36 (strain 81-176).